The sequence spans 387 residues: MLRHNVPVRRDLDQIAADNGFDFHIIDNEIYWDESRAYRFTLRQIEEQIEKPTAELHQMCLEVVDRAVKDEEILTQLAIPPLYWDVIAESWRARDPSLYGRMDFAWCGNAPVKLLEYNADTPTSLYESAYFQWLWLEDARRSGIIPRDADQYNAIQERLISRFSELYSREPFYFCCCQDTDEDRSTVLYLQDCAQQAGQESRFIYIEDLGLGVGGVLTDLDDNVIQRAFKLYPLEWMMRDDNGPLLRKRREQWVEPLWKSILSNKGLMPLLWRFFPGHPNLLASWFDGEKPQIAAGESYVRKPIYSREGGNVTIFDGKNNVVDHADGDYADEPMIYQAFQPLPRFGDSYTLIGSWIVDDEACGMGIREDNTLITKDTSRFVPHYIAG.

101-103 (RMD) is an ATP binding site. Mg(2+)-binding residues include Asp-103, Glu-116, and Asn-118. Residues Lys-265, Lys-302, Gly-309, Gln-337, and 372–374 (LIT) each bind ATP.

Belongs to the glutathionylspermidine synthase preATP-grasp family.

Its function is as follows. May be a ligase forming an amide bond. Shows ATPase activity. Despite its similarity to the C-terminal synthetase domain of Gss, is not a glutathionylspermidine (Gsp) synthetase. Cannot synthesize Gsp, glutathione (GSH), or GSH intermediates, from GSH and spermidine, cysteine and glutamate, gamma-glutamylcysteine and spermidine, and gamma-glutamylcysteine and glycine. Does not bind to Gsp. This Escherichia coli (strain K12) protein is Putative acid--amine ligase YjfC (yjfC).